The following is a 1050-amino-acid chain: uncharacterized protein (1050 aa).

Residues 1-83 (MARLLTKSSQ…AVKLGTFEGC (83 aa)) are Cytoplasmic-facing. Residues serine 9 and serine 60 each carry the phosphoserine modification. Position 64 is a phosphothreonine (threonine 64). A helical membrane pass occupies residues 84 to 104 (FIPTTLNVLSILLYLRFPWII). The Extracellular segment spans residues 105-112 (GEAGVLKT). A helical transmembrane segment spans residues 113-133 (LLMLFISYAVGIFTSLSISAI). The Cytoplasmic portion of the chain corresponds to 134–146 (CTNGMVRGGGAYY). A helical membrane pass occupies residues 147-169 (AVSRSIGPELGGSIGLIFYVGQI). The Extracellular portion of the chain corresponds to 170–202 (LNTGMNISGFVEPIISIFGKESGTISQFLPEGY). Residue asparagine 175 is glycosylated (N-linked (GlcNAc...) asparagine). The chain crosses the membrane as a helical span at residues 203–223 (WWVFLYTTCVLAMCCILCCLG). Residues 224–232 (SAIFAKASN) are Cytoplasmic-facing. The helical transmembrane segment at 233–253 (ALFVVIILSTISIPISSIFVH) threads the bilayer. The Extracellular segment spans residues 254-295 (PFKDPSLLVHFTGLKWSTLMKNLASAYTENEKGTGYESFKST). Serine 270 is modified (phosphoserine). A Phosphothreonine modification is found at threonine 271. The chain crosses the membrane as a helical span at residues 296-316 (FGVFFPATAGLLAGASMSGDL). Over 317–334 (KAPSRSIPKGTISSQATT) the chain is Cytoplasmic. A helical transmembrane segment spans residues 335–355 (FLLYLLVILCVGASVTRTGLL). Topologically, residues 356-368 (LDMDVMEHISLHP) are extracellular. Residues 369–389 (LFIISGILSSGAFSSFMGIFG) form a helical membrane-spanning segment. The Cytoplasmic segment spans residues 390–417 (AAKLLQAIARDDLIPGMFFFAKGSSYDD). The chain crosses the membrane as a helical span at residues 418–438 (IPYVAIGVTYLITQISLFWDI). Residues 439–442 (NMLS) are Extracellular-facing. A helical transmembrane segment spans residues 443-463 (SMITMTFLLTFGFINLSCFLL). Residues 464 to 480 (RISSTPNFRPTFRYFNR) are Cytoplasmic-facing. The chain crosses the membrane as a helical span at residues 481–497 (RTTLVGTILSFGVMFYV). Topologically, residues 498-499 (DR) are extracellular. The helical transmembrane segment at 500–520 (LNAFISFLIAGILVVVIYFTC) threads the bilayer. Residues 521 to 1050 (PPKNWGDVSQ…SKSLTITTAL (530 aa)) lie on the Cytoplasmic side of the membrane. Serine 901 is subject to Phosphoserine. The disordered stretch occupies residues 915–943 (ETESSFGNRSLSPKQENRRTYSDSTIESS). Positions 916-928 (TESSFGNRSLSPK) are enriched in polar residues. Serine 936 is modified (phosphoserine). Position 939 is a phosphothreonine (threonine 939).

It belongs to the SLC12A transporter family.

It is found in the membrane. This is an uncharacterized protein from Schizosaccharomyces pombe (strain 972 / ATCC 24843) (Fission yeast).